Here is a 59-residue protein sequence, read N- to C-terminus: MAVPKKKTSKGKRDQRHAHWKAKARVAARKALSAGKAVLSGRAQGFVYPMPEEDGEAES.

Belongs to the bacterial ribosomal protein bL32 family.

In Synechococcus sp. (strain RCC307), this protein is Large ribosomal subunit protein bL32.